Consider the following 421-residue polypeptide: Mitochondrial distribution and morphology protein 10 (421 aa).

It belongs to the MDM10 family. As to quaternary structure, component of the ER-mitochondria encounter structure (ERMES) or MDM complex, composed of MMM1, MDM10, MDM12 and MDM34. Associates with the mitochondrial outer membrane sorting assembly machinery SAM(core) complex.

The protein resides in the mitochondrion outer membrane. In terms of biological role, component of the ERMES/MDM complex, which serves as a molecular tether to connect the endoplasmic reticulum and mitochondria. Components of this complex are involved in the control of mitochondrial shape and protein biogenesis and may function in phospholipid exchange. MDM10 is involved in the late assembly steps of the general translocase of the mitochondrial outer membrane (TOM complex). Functions in the TOM40-specific route of the assembly of outer membrane beta-barrel proteins, including the association of TOM40 with the receptor TOM22 and small TOM proteins. Can associate with the SAM(core) complex as well as the MDM12-MMM1 complex, both involved in late steps of the major beta-barrel assembly pathway, that is responsible for biogenesis of all outer membrane beta-barrel proteins. May act as a switch that shuttles between both complexes and channels precursor proteins into the TOM40-specific pathway. Plays a role in mitochondrial morphology and in the inheritance of mitochondria. This chain is Mitochondrial distribution and morphology protein 10, found in Vanderwaltozyma polyspora (strain ATCC 22028 / DSM 70294 / BCRC 21397 / CBS 2163 / NBRC 10782 / NRRL Y-8283 / UCD 57-17) (Kluyveromyces polysporus).